Here is a 249-residue protein sequence, read N- to C-terminus: Small ribosomal subunit protein uS3 (249 aa).

The KH type-2 domain maps to 39 to 108 (IRQLINKKLA…TVAVNVAEIP (70 aa)). The disordered stretch occupies residues 214 to 249 (ETFARPQRRDRDERRPEGGDRPARRRPTARRRTGGE). Basic and acidic residues predominate over residues 220–235 (QRRDRDERRPEGGDRP). Basic residues predominate over residues 236–249 (ARRRPTARRRTGGE).

The protein belongs to the universal ribosomal protein uS3 family. As to quaternary structure, part of the 30S ribosomal subunit. Forms a tight complex with proteins S10 and S14.

In terms of biological role, binds the lower part of the 30S subunit head. Binds mRNA in the 70S ribosome, positioning it for translation. The protein is Small ribosomal subunit protein uS3 of Deinococcus radiodurans (strain ATCC 13939 / DSM 20539 / JCM 16871 / CCUG 27074 / LMG 4051 / NBRC 15346 / NCIMB 9279 / VKM B-1422 / R1).